Here is a 402-residue protein sequence, read N- to C-terminus: MNLALFIIFATIFENVVPENCPKMYRRLSKSHTFCTPSTCKIEAGGKVTESDKQTILETHNQLRNKLATGKENQYQKLSSAANMMQMEWDDELAAVAQAHANQCKFEHDSGDQRAVGNFSVGQNLLETSGIFSIDWGKVKIWYTTEVDDFYPEYNKPFQFHGSYGHFSQVIWAKTWKVGCGVAGYVENGVKKVLYTCNYGPAGNLVGSEAYQVGSPCSACPENTKCSATYPGLCKSITPDGPQIRRPSSKDYLLYCDFSDKDPKACKDVTMTGSRPFTTQKLYTGKYVTQVFNAGENMTINFGKFEHKGGLCAFLIGRFGPNVAGETAASEVNFHFSAPHLIFPEGMKETRPITSWHTIGILMRWDKELQISYVFKVKPPTAKPPPQYFEFKEYGVKGGSCP.

The first 13 residues, Met-1 to Phe-13, serve as a signal peptide directing secretion. Positions Leu-57–Tyr-199 constitute an SCP domain.

This sequence belongs to the CRISP family. Post-translationally, contains 7 disulfide bonds. Expressed by the venom gland.

It is found in the secreted. This Tityus serrulatus (Brazilian scorpion) protein is Cysteine-rich venom protein.